Here is a 168-residue protein sequence, read N- to C-terminus: Small ribosomal subunit protein bS16 (168 aa).

Positions 110-168 are disordered; it reads LAEAEGGPSNEATQPKKKKAPAKKAASDIEATADPAGNADKSEPAAEGEDATVAGATEG.

Belongs to the bacterial ribosomal protein bS16 family.

This is Small ribosomal subunit protein bS16 from Mycobacterium sp. (strain JLS).